The following is a 368-amino-acid chain: Cytochrome b (368 aa).

Transmembrane regions (helical) follow at residues 32-52 (FGFLVAMTFVLQIITGITLAF), 76-98 (WEFRMLHATTASFVFLCILIHMT), 112-132 (AWMSGLVLYLLTIATAFLGYV), and 174-194 (FFVLHFILPFIGCIIIVLHIF). Heme b-binding residues include histidine 82 and histidine 96. Residues histidine 178 and histidine 192 each contribute to the heme b site. Histidine 197 is an a ubiquinone binding site. Transmembrane regions (helical) follow at residues 219 to 239 (MLMTDAKCLSYLIGLIFLQAA), 285 to 305 (GLLVFMSSLINLGLLSEIRAL), 323 to 343 (GWVIIWVYSMIFLIIIGSAIP), and 347 to 367 (YILYGRLATILYLTTGLVLCL).

The protein belongs to the cytochrome b family. In terms of assembly, the main subunits of complex b-c1 are: cytochrome b, cytochrome c1 and the Rieske protein. Requires heme b as cofactor.

It is found in the mitochondrion inner membrane. Functionally, component of the ubiquinol-cytochrome c reductase complex (complex III or cytochrome b-c1 complex) that is part of the mitochondrial respiratory chain. The b-c1 complex mediates electron transfer from ubiquinol to cytochrome c. Contributes to the generation of a proton gradient across the mitochondrial membrane that is then used for ATP synthesis. This chain is Cytochrome b (MT-CYB), found in Toxoplasma gondii.